Reading from the N-terminus, the 391-residue chain is Serpin B13 (391 aa).

Belongs to the serpin family. Ov-serpin subfamily. As to expression, skin specific.

Its subcellular location is the cytoplasm. Functionally, may play a role in the proliferation or differentiation of keratinocytes. This chain is Serpin B13 (SERPINB13), found in Homo sapiens (Human).